The sequence spans 1059 residues: Dihydropyrimidine dehydrogenase [NADP(+)] (1059 aa).

A 4Fe-4S ferredoxin-type 1 domain is found at 84-118; the sequence is ERGALKEAMRCLKCADAPCQKSCPTQLDVKSFITS. [4Fe-4S] cluster contacts are provided by Cys-94, Cys-97, Cys-102, Cys-106, Cys-145, Cys-151, Cys-155, and Gln-171. FAD-binding positions include 207-211, 231-239, Arg-248, and Leu-274; these read GCGPA and EKRAYIGGL. NADP(+)-binding positions include 354-357, 378-379, Arg-385, 451-453, and 495-501; these read AGDT, RK, AFG, and DVAGVAE. 494 to 503 contacts FAD; that stretch reads GDVAGVAETT. Residues Ser-564 and 588-589 contribute to the FMN site; that span reads KT. Substrate contacts are provided by residues Asn-623 and 682–684; that span reads NLS. Cys-685 acts as the Proton acceptor in catalysis. FMN is bound at residue Lys-723. 750-751 provides a ligand contact to substrate; sequence NT. FMN is bound by residues Gly-781, 807–809, and 830–831; these read TGG and CS. 4Fe-4S ferredoxin-type domains are found at residues 955 to 987 and 989 to 1019; these read KVAI…FDPV and HQPH…MVPR. [4Fe-4S] cluster is bound by residues Cys-964, Cys-967, Cys-970, Cys-974, Cys-998, Cys-1001, Cys-1004, and Cys-1008.

Belongs to the dihydropyrimidine dehydrogenase family. It depends on [4Fe-4S] cluster as a cofactor. FAD serves as cofactor. The cofactor is FMN.

The catalysed reaction is 5,6-dihydrouracil + NADP(+) = uracil + NADPH + H(+). It participates in amino-acid biosynthesis; beta-alanine biosynthesis. Its function is as follows. Involved in pyrimidine base degradation. Catalyzes the reduction of uracil and thymine. Involved in the degradation of the chemotherapeutic drug 5-fluorouracil. The chain is Dihydropyrimidine dehydrogenase [NADP(+)] (dpyd-1) from Caenorhabditis elegans.